The chain runs to 97 residues: ORF9b protein (97 aa).

The region spanning 8–97 (MHPALRLVDP…PDEFVVVTVK (90 aa)) is the 9b domain. The short motif at 45–53 (ILRLGSPLS) is the Nuclear export signal element.

Belongs to the coronavirus group 2 protein 9b family. Homodimer. Interacts with host TOMM70; the interaction occurs only with monomer.

It localises to the host cytoplasm. The protein resides in the host mitochondrion. Functionally, plays a role in inhibiting the host innate immune response by targeting the mitochondrial-associated innate immune response. Acts by binding to host TOMM70, inhibiting its binding to HSP90AB1 thereby disrupting the interferon activation pathway. This is ORF9b protein from Homo sapiens (Human).